The primary structure comprises 85 residues: MPSVTQRLRDPDINPCLSESDASTRCLDENNYDRERCSTYFLRYKNCRRFWNSIVMQRRKNGVKPFMPTAAERDEILRAVGNMPY.

The CHCH domain maps to 13 to 55 (INPCLSESDASTRCLDENNYDRERCSTYFLRYKNCRRFWNSIV). 2 short sequence motifs (cx9C motif) span residues 16 to 26 (CLSESDASTRC) and 37 to 47 (CSTYFLRYKNC). 2 disulfides stabilise this stretch: Cys-16-Cys-47 and Cys-26-Cys-37.

This sequence belongs to the CHCHD7 family. In terms of assembly, monomer.

It is found in the mitochondrion intermembrane space. In Homo sapiens (Human), this protein is Coiled-coil-helix-coiled-coil-helix domain-containing protein 7 (CHCHD7).